The following is a 241-amino-acid chain: ATP synthase subunit a (241 aa).

The next 5 membrane-spanning stretches (helical) occupy residues 30–50 (GQVF…ISLG), 91–111 (FIGT…LIPW), 128–148 (INTT…AGLS), 193–213 (LVVG…VMFL), and 214–234 (GLFT…YYIG).

It belongs to the ATPase A chain family. F-type ATPases have 2 components, CF(1) - the catalytic core - and CF(0) - the membrane proton channel. CF(1) has five subunits: alpha(3), beta(3), gamma(1), delta(1), epsilon(1). CF(0) has four main subunits: a, b, b' and c.

The protein resides in the cellular thylakoid membrane. In terms of biological role, key component of the proton channel; it plays a direct role in the translocation of protons across the membrane. The chain is ATP synthase subunit a from Prochlorococcus marinus (strain MIT 9301).